The chain runs to 378 residues: Probable selenide, water dikinase (378 aa).

Cys-33 is a catalytic residue. ATP-binding positions include Lys-36, 63 to 65 (GLD), Asp-83, Asp-106, and 158 to 160 (GQT). Asp-65 provides a ligand contact to Mg(2+). A Mg(2+)-binding site is contributed by Asp-106. Asp-260 is a binding site for Mg(2+).

It belongs to the selenophosphate synthase 1 family. Class I subfamily. Homodimer. Requires Mg(2+) as cofactor.

The catalysed reaction is hydrogenselenide + ATP + H2O = selenophosphate + AMP + phosphate + 2 H(+). In terms of biological role, synthesizes selenophosphate from selenide and ATP. This chain is Probable selenide, water dikinase (seld-1), found in Caenorhabditis elegans.